The chain runs to 177 residues: MRRFILERNPTNVKNMAKLSPIPHTLLGIRKFMLERNHTSVINVAQPLFYPQPLVNMRRFILERNSTNVKNVAKPSTIFHTLLYIRQFILERNAINGIKTFTWSSSPHKHRRTHTGEKPYKCEECGKAFTASSTLSEYKTIHTGEKPCKCEECGKAFNWSSDFNKHKRIHSGQKPIL.

Residues Lys99–His114 form a C2H2-type 1; degenerate zinc finger. A C2H2-type 2; degenerate zinc finger spans residues Tyr120 to His142. A C2H2-type 3 zinc finger spans residues Cys148–His170.

The protein localises to the nucleus. Its function is as follows. May be involved in transcriptional regulation. This is Putative zinc finger protein 826 (ZNF826P) from Homo sapiens (Human).